A 308-amino-acid chain; its full sequence is Ankyrin repeat and SOCS box protein 12 (308 aa).

5 ANK repeats span residues 63–92 (IPGT…DVDS), 96–125 (KAQT…CPSG), 129–158 (NNCS…EANV), 171–200 (SCSG…DPDY), and 213–243 (QPRT…NIYL). One can recognise an SOCS box domain in the interval 268-308 (PRSLLSQTRLVIRRSLCRANQSQATDQLDIPPVLISYLKHQ).

It belongs to the ankyrin SOCS box (ASB) family. As to quaternary structure, interacts with CUL5 and RNF7.

It functions in the pathway protein modification; protein ubiquitination. Functionally, probable substrate-recognition component of a SCF-like ECS (Elongin-Cullin-SOCS-box protein) E3 ubiquitin-protein ligase complex which mediates the ubiquitination and subsequent proteasomal degradation of target proteins. The sequence is that of Ankyrin repeat and SOCS box protein 12 (Asb12) from Mus musculus (Mouse).